Reading from the N-terminus, the 282-residue chain is Large ribosomal subunit protein uL2c (282 aa).

The disordered stretch occupies residues 230-261 (SAQNAVDHPHGGGEGKAPIGRIPSTPWGKPAL).

Belongs to the universal ribosomal protein uL2 family. As to quaternary structure, part of the 50S ribosomal subunit.

The protein resides in the plastid. The sequence is that of Large ribosomal subunit protein uL2c (rpl2) from Helicosporidium sp. subsp. Simulium jonesii (Green alga).